Reading from the N-terminus, the 154-residue chain is Myoglobin (154 aa).

The Globin domain maps to 2 to 148 (GLSDGEWQLV…FRNDMAAKYK (147 aa)). Ser4 bears the Phosphoserine mark. Residue His65 coordinates nitrite. His65 lines the O2 pocket. Thr68 carries the post-translational modification Phosphothreonine. A heme b-binding site is contributed by His94.

This sequence belongs to the globin family. In terms of assembly, monomeric.

The protein localises to the cytoplasm. The protein resides in the sarcoplasm. It carries out the reaction Fe(III)-heme b-[protein] + nitric oxide + H2O = Fe(II)-heme b-[protein] + nitrite + 2 H(+). The catalysed reaction is H2O2 + AH2 = A + 2 H2O. In terms of biological role, monomeric heme protein which primary function is to store oxygen and facilitate its diffusion within muscle tissues. Reversibly binds oxygen through a pentacoordinated heme iron and enables its timely and efficient release as needed during periods of heightened demand. Depending on the oxidative conditions of tissues and cells, and in addition to its ability to bind oxygen, it also has a nitrite reductase activity whereby it regulates the production of bioactive nitric oxide. Under stress conditions, like hypoxia and anoxia, it also protects cells against reactive oxygen species thanks to its pseudoperoxidase activity. This is Myoglobin (MB) from Aotus trivirgatus (Three-striped night monkey).